The chain runs to 312 residues: MINREDLLKNPVEDIALRDLEKYSDIVNVFDKIYGFSSEGIVRGSKILKEMIKDADLRFLSFTANLVSTGLRGLFADLVKRGYFNIIVTTGGTIDHDLARSFGGVYYKGSFDIDDAMLKDLEIHRLGNVLVPFESYGKVIEEIVRKFLPEIAKDKKEIPAYELLWEFGKRISDSNSILRAAYEKKVPVIVPGIVDGSFGTNLFIQSQFLNFKINLFEDMRLIKDLVFSCKKSGALIIGGGISKHHTIWWNQFKDGLDYAVYVTTAQEYDGSLSGAKPREAISWNKIRPNAKHATIYGDATIIVPILAASLLS.

The Nucleophile role is filled by lysine 285.

The protein belongs to the deoxyhypusine synthase family. The cofactor is NAD(+).

It carries out the reaction [eIF5A protein]-L-lysine + spermidine = [eIF5A protein]-deoxyhypusine + propane-1,3-diamine. It functions in the pathway protein modification; eIF5A hypusination. Catalyzes the NAD-dependent oxidative cleavage of spermidine and the subsequent transfer of the butylamine moiety of spermidine to the epsilon-amino group of a specific lysine residue of the eIF-5A precursor protein to form the intermediate deoxyhypusine residue. In Saccharolobus islandicus (strain M.16.4 / Kamchatka #3) (Sulfolobus islandicus), this protein is Probable deoxyhypusine synthase.